Consider the following 308-residue polypeptide: Ribonuclease Z (308 aa).

Zn(2+) contacts are provided by His60, His62, Asp64, His65, His140, Asp209, and His269. Asp64 functions as the Proton acceptor in the catalytic mechanism.

This sequence belongs to the RNase Z family. In terms of assembly, homodimer. The cofactor is Zn(2+).

The enzyme catalyses Endonucleolytic cleavage of RNA, removing extra 3' nucleotides from tRNA precursor, generating 3' termini of tRNAs. A 3'-hydroxy group is left at the tRNA terminus and a 5'-phosphoryl group is left at the trailer molecule.. Zinc phosphodiesterase, which displays some tRNA 3'-processing endonuclease activity. Probably involved in tRNA maturation, by removing a 3'-trailer from precursor tRNA. The protein is Ribonuclease Z of Methanococcus maripaludis (strain DSM 14266 / JCM 13030 / NBRC 101832 / S2 / LL).